The primary structure comprises 311 residues: Dehydrogenase/reductase SDR family member 7C (311 aa).

The N-terminal stretch at 1-18 (MGVTAVLMLPLLLLGISG) is a signal peptide. 5 residues coordinate NAD(+): Ser-47, Leu-49, Tyr-191, Lys-195, and Ser-226. Tyr-191 serves as the catalytic Proton acceptor.

This sequence belongs to the short-chain dehydrogenases/reductases (SDR) family.

The protein resides in the sarcoplasmic reticulum membrane. It carries out the reaction all-trans-retinol + NAD(+) = all-trans-retinal + NADH + H(+). Functionally, NADH-dependent oxidoreductase which catalyzes the oxidation of all-trans-retinol to all-trans-retinal. Plays a role in the regulation of cardiac and skeletal muscle metabolic functions. Maintains Ca(2+) intracellular homeostasis by repressing Ca(2+) release from the sarcoplasmic reticulum (SR) in myotubes, possibly through local alternations in NAD/NADH or retinol/retinal. Also plays a role in Ca(2+) homeostasis by controlling Ca(2+) overload in the cytosol and the SR in myotubes. Involved in glucose uptake into skeletal muscles and muscle performance by activating PI3K and mTORC2-mediated AKT1 phosphorylation signaling pathways, possibly through the action of its downstream catalytic product all-trans-retinoic acid. This Bos taurus (Bovine) protein is Dehydrogenase/reductase SDR family member 7C (DHRS7C).